Consider the following 2122-residue polypeptide: Pecanex-like protein 2 (2122 aa).

Transmembrane regions (helical) follow at residues L36–F53 and A60–H82. 2 disordered regions span residues Q92–A164 and Q180–P250. Polar residues-rich tracts occupy residues S146–S157 and A185–R203. N288 is a glycosylation site (N-linked (GlcNAc...) asparagine). Low complexity-rich tracts occupy residues V392 to A407 and P458 to T476. Disordered regions lie at residues V392–N556 and V575–T634. The segment covering S528–K538 has biased composition (basic and acidic residues). The N-linked (GlcNAc...) asparagine glycan is linked to N556. Positions T599–K618 are enriched in basic and acidic residues. The span at D625–T634 shows a compositional bias: polar residues. The next 13 helical transmembrane spans lie at V825–F845, L849–V869, Q882–L902, H933–I953, G976–C998, H1010–S1030, L1080–L1100, F1105–L1125, Y1174–N1194, S1218–F1238, E1245–L1265, F1270–A1290, and T1305–I1325. 3 N-linked (GlcNAc...) asparagine glycosylation sites follow: N1393, N1534, and N1802. 2 disordered regions span residues S1858–P1943 and S1955–H1991. A compositionally biased stretch (basic and acidic residues) spans E1888 to R1898. Over residues S1922–G1942 the composition is skewed to polar residues. A compositionally biased stretch (low complexity) spans S1968–S1981. The N-linked (GlcNAc...) asparagine glycan is linked to N2039. The interval V2097–Q2122 is disordered. Over residues T2112–Q2122 the composition is skewed to polar residues.

It belongs to the pecanex family.

It localises to the membrane. May play a role in tumorigenesis. This chain is Pecanex-like protein 2, found in Mus musculus (Mouse).